Here is a 240-residue protein sequence, read N- to C-terminus: 1-(5-phosphoribosyl)-5-[(5-phosphoribosylamino)methylideneamino] imidazole-4-carboxamide isomerase (240 aa).

The active-site Proton acceptor is the D10. D132 acts as the Proton donor in catalysis.

This sequence belongs to the HisA/HisF family.

It localises to the cytoplasm. It carries out the reaction 1-(5-phospho-beta-D-ribosyl)-5-[(5-phospho-beta-D-ribosylamino)methylideneamino]imidazole-4-carboxamide = 5-[(5-phospho-1-deoxy-D-ribulos-1-ylimino)methylamino]-1-(5-phospho-beta-D-ribosyl)imidazole-4-carboxamide. The protein operates within amino-acid biosynthesis; L-histidine biosynthesis; L-histidine from 5-phospho-alpha-D-ribose 1-diphosphate: step 4/9. The chain is 1-(5-phosphoribosyl)-5-[(5-phosphoribosylamino)methylideneamino] imidazole-4-carboxamide isomerase from Methanocella arvoryzae (strain DSM 22066 / NBRC 105507 / MRE50).